We begin with the raw amino-acid sequence, 172 residues long: 5'(3')-deoxyribonucleotidase (172 aa).

The Nucleophile role is filled by Asp-8. Residues Asp-8, Asp-10, and Asp-132 each coordinate Mg(2+). Asp-10 (proton donor) is an active-site residue.

The protein belongs to the 5'(3')-deoxyribonucleotidase family. Mg(2+) serves as cofactor.

Functionally, dephosphorylates nucleoside monophosphates such as the 5' and 2'(3')-phosphates of deoxyribonucleotides in vitro. Also catalyzes the dephosphorylation of coenzyme A (CoA), pyridoxal-5'-phosphate (PLP), riboflavine-5-phosphate (FMN) and nicotinamide adenine dinucleotide phosphate (NADP) in vitro. The protein is 5'(3')-deoxyribonucleotidase (yorS) of Bacillus subtilis (strain 168).